Consider the following 107-residue polypeptide: Protamine-2 (107 aa).

The interval 1-94 is disordered; sequence MVRYRMRSPS…RRGCRRSRRR (94 aa). 3 positions are modified to phosphoserine: serine 8, serine 10, and serine 33. The span at 43–94 shows a compositional bias: basic residues; the sequence is THRGHHHHRHRRCSRKRLHRIHKRRRSCRRRRRHSCRHRRRHRRGCRRSRRR.

The protein belongs to the protamine P2 family. As to quaternary structure, interacts with TDRP. In terms of processing, proteolytic processing into mature chains is required for histone eviction during spermatogenesis. Transition proteins (TNP1 and TNP2) are required for processing. In terms of tissue distribution, expressed in spermatids (at protein level).

The protein localises to the nucleus. It is found in the chromosome. Protamines substitute for histones in the chromatin of sperm during the haploid phase of spermatogenesis. They compact sperm DNA into a highly condensed, stable and inactive complex. This Mus musculus (Mouse) protein is Protamine-2 (Prm2).